Here is a 302-residue protein sequence, read N- to C-terminus: MNKLTAQNLLKKSRFLKYSLLTSISVGAVMAIPVERIAMGMDQEAFCAELSKKLSLEFSQSYEDTISTTQEKNNLSNNGPSNKSDMAEELANVTTKSLYKVRKMQAPEFKISENKFLNNLDSQTISKELDPNTYTTESISQKPEIILTASSTTVSTDSNSFVTVSTASSLKPVTSYQPTPDFKPNYSLGFNTPINTNLKIVRKLSFSSEQPQIVQHSKSMIPLMPTAPVVLPKSSIEIEPEMVSNIPRVDDTISIKSSEVREDIKGTKDQKTLVDQFNSSIGIWSKKTGKNKYDLNKDSSQK.

The N-terminal stretch at 1–28 (MNKLTAQNLLKKSRFLKYSLLTSISVGA) is a signal peptide.

This is an uncharacterized protein from Rickettsia prowazekii (strain Madrid E).